We begin with the raw amino-acid sequence, 89 residues long: Small ribosomal subunit protein uS17 (89 aa).

Belongs to the universal ribosomal protein uS17 family. Part of the 30S ribosomal subunit.

Functionally, one of the primary rRNA binding proteins, it binds specifically to the 5'-end of 16S ribosomal RNA. This Xanthomonas campestris pv. campestris (strain 8004) protein is Small ribosomal subunit protein uS17.